A 156-amino-acid chain; its full sequence is Bacterial microcompartment shell protein PduK (156 aa).

The 86-residue stretch at 4–89 (SLGLLEVSGL…PGDGILSHSV (86 aa)) folds into the BMC domain. The segment at 81-119 (GDGILSHSVTPESESEPAPAPTPVVPHEEIPEDHAAPEA) is disordered. The span at 106-116 (PHEEIPEDHAA) shows a compositional bias: basic and acidic residues.

The protein belongs to the bacterial microcompartments protein family. In terms of assembly, interacts with shell protein PduA and assembly protein PduM. Interacts with PduP, probably with its first 18 residues. The cofactor is Fe cation.

The protein localises to the bacterial microcompartment. Its pathway is polyol metabolism; 1,2-propanediol degradation. A minor shell protein of the bacterial microcompartment (BMC) dedicated to 1,2-propanediol (1,2-PD) degradation. In terms of biological role, expression of a cosmid containing the full 21-gene pdu operon in E.coli allows E.coli to grow on 1,2-propanediol (1,2-PD) with the appearance of bacterial microcompartments (BMC) in its cytoplasm. Overexpression of this protein leads to the appearance of a single large aggregate complex in the cytoplasm. Functionally, the 1,2-PD-specific bacterial microcompartment (BMC) concentrates low levels of 1,2-PD catabolic enzymes, concentrates volatile reaction intermediates thus enhancing pathway flux and keeps the level of toxic, mutagenic propionaldehyde low. The chain is Bacterial microcompartment shell protein PduK from Citrobacter freundii.